We begin with the raw amino-acid sequence, 310 residues long: MSEELSKKHTTRLNKLQKRLRREVGSAIADYNMIEDGDRVMCCLSGGKDSYAMLDILMNLQQRAPIQFEIIAVNLDQKQPGFPEDILPAYLDKLKVPYHILEKDTYSIVKDKIPEGKTTCSLCSRLRRGTLYGFAQRIGATKIALGHHRDDIIETLFLNMFFGGKMKAMPPKLLSDDGANIVIRPLAYCREKDLEEYAQLKQFPIIPCNLCGSQENLKRAAVKDMLNQWDRQYPGRIETIFTAMQNTAPSQGVDREQFDFISLKRDPDVPMTGDVAEADLPAFDFLDIANSGHIDLDAAQRIDVVSFYEA.

A PP-loop motif motif is present at residues 45-50 (SGGKDS). [4Fe-4S] cluster contacts are provided by Cys120, Cys123, and Cys211.

Belongs to the TtcA family. Homodimer. Mg(2+) serves as cofactor. Requires [4Fe-4S] cluster as cofactor.

The protein resides in the cytoplasm. The enzyme catalyses cytidine(32) in tRNA + S-sulfanyl-L-cysteinyl-[cysteine desulfurase] + AH2 + ATP = 2-thiocytidine(32) in tRNA + L-cysteinyl-[cysteine desulfurase] + A + AMP + diphosphate + H(+). It participates in tRNA modification. In terms of biological role, catalyzes the ATP-dependent 2-thiolation of cytidine in position 32 of tRNA, to form 2-thiocytidine (s(2)C32). The sulfur atoms are provided by the cysteine/cysteine desulfurase (IscS) system. The protein is tRNA-cytidine(32) 2-sulfurtransferase of Shewanella putrefaciens (strain CN-32 / ATCC BAA-453).